Consider the following 102-residue polypeptide: RxLR effector protein PexRD41 (102 aa).

A signal peptide spans 1 to 21 (MRSIFYFALAFAALTCSNASA). Positions 39-53 (RSLRVAGQEAARGEE) match the RxLR-dEER motif.

Belongs to the RxLR effector family. As to quaternary structure, interacts with host KRBP1.

The protein localises to the secreted. It is found in the host cytoplasm. It localises to the host nucleus. Its subcellular location is the host nucleolus. Functionally, effector that enhances P.infestans colonization of host plant leaves. During the early stages of P.infestans infection, interacts with and stabilizes host potato K-homology (KH) RNA-binding protein KRBP1, leading to its accumulation. In Phytophthora infestans (strain T30-4) (Potato late blight agent), this protein is RxLR effector protein PexRD41.